A 138-amino-acid chain; its full sequence is Putative pre-16S rRNA nuclease (138 aa).

It belongs to the YqgF nuclease family.

The protein localises to the cytoplasm. In terms of biological role, could be a nuclease involved in processing of the 5'-end of pre-16S rRNA. In Bacillus pumilus (strain SAFR-032), this protein is Putative pre-16S rRNA nuclease.